The chain runs to 345 residues: G-protein coupled receptor str-33 (345 aa).

At 1–11 (MTVNLRDLSRT) the chain is on the extracellular side. The chain crosses the membrane as a helical span at residues 12 to 32 (IAEFAFLTALVCNSLLIYLTA). At 33–37 (RRTKN) the chain is on the cytoplasmic side. Residues 38 to 58 (ITGAYKYMIILFALLGLIFSC) form a helical membrane-spanning segment. Topologically, residues 59–92 (TEMLARPFVHNFNASFVYFSLSNDLSEFKSLVQM) are extracellular. N-linked (GlcNAc...) asparagine glycosylation is present at Asn71. A helical membrane pass occupies residues 93–113 (LLVLYSGLYSSLISFVAVQFI). Residues 114-133 (YRYMVLVNANLLESWFTGWK) lie on the Cytoplasmic side of the membrane. Residues 134–154 (LVFWVFYVIFFGFAWSASVYF) form a helical membrane-spanning segment. The Extracellular segment spans residues 155–204 (CLFPDTYSYNYIRTEFKDVYNIGVDRVAIFILVAYEKHPSSEEYKLRPAS). Residues 205–225 (VIMIAGTISILVIQYSIMLFC) form a helical membrane-spanning segment. The Cytoplasmic segment spans residues 226-258 (GASMHRQMNEKLKNFSPDNQRLQKQFFKTLLLQ). Residues 259 to 279 (ISVPTVLFHMPIFPVLLGPFF) form a helical membrane-spanning segment. Residues 280-288 (NFEISAESG) are Extracellular-facing. Residues 289–309 (IIYSLFSLYPPIDGLIIMTVV) form a helical membrane-spanning segment. Residues 310–345 (TDYRIALTELFLGSHSGAQVEVIPVEVVSILNFSLL) lie on the Cytoplasmic side of the membrane.

Belongs to the nematode receptor-like protein str family. In terms of tissue distribution, detected in ALM and PLM mechanosensory neurons and head neurons.

The protein resides in the cell membrane. Its function is as follows. Regulates egg-laying and locomotion. Likely to act upstream of goa-1 to suppress 5-hydroxytryptamine (5-HT) biosynthesis in hermaphrodite-specific neurons (HSNs) through inhibition of tph-1 transcription. The chain is G-protein coupled receptor str-33 from Caenorhabditis elegans.